The primary structure comprises 115 residues: ComG operon protein 5 (115 aa).

Positions 1–7 (MWRENKG) are cleaved as a propeptide — leader sequence. N-methylphenylalanine is present on phenylalanine 8. A helical transmembrane segment spans residues 13-31 (TMSALSLWLFVLLTVVPLW).

Processing of ComGE in competent cells requires ComC.

It localises to the cell membrane. Its subcellular location is the cell surface. In terms of biological role, required for transformation and DNA binding. This is ComG operon protein 5 (comGE) from Bacillus subtilis (strain 168).